The sequence spans 397 residues: MAKKKFERTKPHLNIGTIGHVDHGKTTLTAAITKWLAKKGLAEFRAFDSIDNAPEEKERGVTINISHVEYQTDKRHYAHVDCPGHADYIKNMISGAAHMDGTILVVAASDGPMPQTREHILLARQVQVPSIVVFLNKVDLVDDPELLDLVELELRELLNEYEFPGDDIPIIRGSALKALESENPDDPDVKQIYALMDAVDAYIPEPERDLDKPFLMPVGDVFTISGRGTVVTGRIDRGIIKTGDEVEIVGVRPTQKTVCTGVEMFRKTLDEGRAGDDVGLLLRGIKREDVERGQVVAKPGSITPHTKFMAQVYVLTKEEGGRHTPFFTGYRPQFYFRTTDVTGVAKLAEGVEMVMPGDNVEMEVTLITPIAMEEQLRFAIREGGRTVGAGVVSKVIE.

The tr-type G domain occupies 10 to 207; that stretch reads KPHLNIGTIG…AVDAYIPEPE (198 aa). The interval 19–26 is G1; that stretch reads GHVDHGKT. 19 to 26 provides a ligand contact to GTP; that stretch reads GHVDHGKT. T26 lines the Mg(2+) pocket. The segment at 60 to 64 is G2; it reads GVTIN. The segment at 81 to 84 is G3; the sequence is DCPG. Residues 81 to 85 and 136 to 139 contribute to the GTP site; these read DCPGH and NKVD. A G4 region spans residues 136–139; the sequence is NKVD. The interval 174 to 176 is G5; the sequence is SAL.

The protein belongs to the TRAFAC class translation factor GTPase superfamily. Classic translation factor GTPase family. EF-Tu/EF-1A subfamily. Monomer.

It localises to the cytoplasm. The catalysed reaction is GTP + H2O = GDP + phosphate + H(+). GTP hydrolase that promotes the GTP-dependent binding of aminoacyl-tRNA to the A-site of ribosomes during protein biosynthesis. The chain is Elongation factor Tu from Syntrophus aciditrophicus (strain SB).